The primary structure comprises 990 residues: Bifunctional glutamine synthetase adenylyltransferase/adenylyl-removing enzyme (990 aa).

The tract at residues 1–474 (MIFSAITADL…HYAKLFEGDP (474 aa)) is adenylyl removase. Residues 478–990 (AKLPPVDYGA…FNRLIGGEDA (513 aa)) are adenylyl transferase.

The protein belongs to the GlnE family. It depends on Mg(2+) as a cofactor.

The enzyme catalyses [glutamine synthetase]-O(4)-(5'-adenylyl)-L-tyrosine + phosphate = [glutamine synthetase]-L-tyrosine + ADP. It carries out the reaction [glutamine synthetase]-L-tyrosine + ATP = [glutamine synthetase]-O(4)-(5'-adenylyl)-L-tyrosine + diphosphate. Its function is as follows. Involved in the regulation of glutamine synthetase GlnA, a key enzyme in the process to assimilate ammonia. When cellular nitrogen levels are high, the C-terminal adenylyl transferase (AT) inactivates GlnA by covalent transfer of an adenylyl group from ATP to specific tyrosine residue of GlnA, thus reducing its activity. Conversely, when nitrogen levels are low, the N-terminal adenylyl removase (AR) activates GlnA by removing the adenylyl group by phosphorolysis, increasing its activity. The regulatory region of GlnE binds the signal transduction protein PII (GlnB) which indicates the nitrogen status of the cell. The polypeptide is Bifunctional glutamine synthetase adenylyltransferase/adenylyl-removing enzyme (Rhodopseudomonas palustris (strain TIE-1)).